The chain runs to 295 residues: Glutenin, low molecular weight subunit PTDUCD1 (295 aa).

A signal peptide spans 1-20; that stretch reads MKTFLVFALLAVVATSTIAQ. A disordered region spans residues 30-61; sequence ERPWQEQPLPPQHTLFPQQQPFPQQQQPPFSQ. Residues 41–61 show a composition bias toward low complexity; the sequence is QHTLFPQQQPFPQQQQPPFSQ.

Belongs to the gliadin/glutenin family. In terms of assembly, disulfide-bridge linked aggregates.

In terms of biological role, glutenins are high-molecular weight seed storage proteins of wheat endosperm. Thought to be responsible for the visco-elastic property of wheat dough. The chain is Glutenin, low molecular weight subunit PTDUCD1 from Triticum aestivum (Wheat).